The sequence spans 490 residues: Cytochrome P450 71A19 (490 aa).

Residues 3 to 23 form a helical membrane-spanning segment; the sequence is IILVTLCLTTLLALLLLKSIL. Cysteine 433 serves as a coordination point for heme.

The protein belongs to the cytochrome P450 family. Heme is required as a cofactor.

It localises to the membrane. In Arabidopsis thaliana (Mouse-ear cress), this protein is Cytochrome P450 71A19 (CYP71A19).